A 410-amino-acid polypeptide reads, in one-letter code: Elongation factor Tu, chloroplastic (410 aa).

The tr-type G domain maps to 10–214 (KPHVNIGTIG…QVDAYIPTPE (205 aa)). The G1 stretch occupies residues 19–26 (GHVDHGKT). 19-26 (GHVDHGKT) is a GTP binding site. A Mg(2+)-binding site is contributed by Thr-26. The tract at residues 60–64 (GITIN) is G2. The tract at residues 81–84 (DCPG) is G3. GTP contacts are provided by residues 81–85 (DCPGH) and 136–139 (NKED). The tract at residues 136 to 139 (NKED) is G4. The G5 stretch occupies residues 174 to 176 (SAL).

Belongs to the TRAFAC class translation factor GTPase superfamily. Classic translation factor GTPase family. EF-Tu/EF-1A subfamily.

Its subcellular location is the plastid. It is found in the chloroplast. The enzyme catalyses GTP + H2O = GDP + phosphate + H(+). In terms of biological role, GTP hydrolase that promotes the GTP-dependent binding of aminoacyl-tRNA to the A-site of ribosomes during protein biosynthesis. The chain is Elongation factor Tu, chloroplastic (tufA) from Chlorokybus atmophyticus (Soil alga).